Consider the following 159-residue polypeptide: SsrA-binding protein (159 aa).

The interval 131–159 is disordered; sequence KGKKLHDKRESEKERDWNRQKSRLLKDNG. A compositionally biased stretch (basic and acidic residues) spans 137-159; it reads DKRESEKERDWNRQKSRLLKDNG.

Belongs to the SmpB family.

The protein localises to the cytoplasm. Required for rescue of stalled ribosomes mediated by trans-translation. Binds to transfer-messenger RNA (tmRNA), required for stable association of tmRNA with ribosomes. tmRNA and SmpB together mimic tRNA shape, replacing the anticodon stem-loop with SmpB. tmRNA is encoded by the ssrA gene; the 2 termini fold to resemble tRNA(Ala) and it encodes a 'tag peptide', a short internal open reading frame. During trans-translation Ala-aminoacylated tmRNA acts like a tRNA, entering the A-site of stalled ribosomes, displacing the stalled mRNA. The ribosome then switches to translate the ORF on the tmRNA; the nascent peptide is terminated with the 'tag peptide' encoded by the tmRNA and targeted for degradation. The ribosome is freed to recommence translation, which seems to be the essential function of trans-translation. The protein is SsrA-binding protein of Rhizobium leguminosarum bv. trifolii (strain WSM2304).